Here is a 238-residue protein sequence, read N- to C-terminus: Sugar fermentation stimulation protein homolog (238 aa).

It belongs to the SfsA family.

The polypeptide is Sugar fermentation stimulation protein homolog (Actinobacillus succinogenes (strain ATCC 55618 / DSM 22257 / CCUG 43843 / 130Z)).